The primary structure comprises 471 residues: Chromosomal replication initiator protein DnaA (471 aa).

Residues 1–77 form a domain I, interacts with DnaA modulators region; it reads MELNSSFWTL…YTEISDTYGK (77 aa). Positions 77-130 are domain II; that stretch reads KPFEVEFSITGNKINSHIETSTTPDEVLSGSEILQAQLARAQNIQPTQPRSSSD. The domain III, AAA+ region stretch occupies residues 131–349; it reads TLNSELTFST…GNLKKVKMFS (219 aa). Residues Gly-176, Gly-178, Lys-179, and Thr-180 each coordinate ATP. A domain IV, binds dsDNA region spans residues 350–471; sequence ELQGLPIDHE…EQRIHNITRV (122 aa).

This sequence belongs to the DnaA family. In terms of assembly, oligomerizes as a right-handed, spiral filament on DNA at oriC.

It localises to the cytoplasm. Functionally, plays an essential role in the initiation and regulation of chromosomal replication. ATP-DnaA binds to the origin of replication (oriC) to initiate formation of the DNA replication initiation complex once per cell cycle. Binds the DnaA box (a 9 base pair repeat at the origin) and separates the double-stranded (ds)DNA. Forms a right-handed helical filament on oriC DNA; dsDNA binds to the exterior of the filament while single-stranded (ss)DNA is stabiized in the filament's interior. The ATP-DnaA-oriC complex binds and stabilizes one strand of the AT-rich DNA unwinding element (DUE), permitting loading of DNA polymerase. After initiation quickly degrades to an ADP-DnaA complex that is not apt for DNA replication. Binds acidic phospholipids. This Bdellovibrio bacteriovorus (strain ATCC 15356 / DSM 50701 / NCIMB 9529 / HD100) protein is Chromosomal replication initiator protein DnaA.